The sequence spans 480 residues: Probable histone deacetylase 1-A (480 aa).

A histone deacetylase region spans residues 10–321 (KVCYYYDGDV…WTYETAVALD (312 aa)). The active site involves histidine 141. A disordered region spans residues 388-480 (SIHDDSGEED…KRVKEETKSV (93 aa)). Residues 401-416 (PDKRISIRSSDKRIAC) show a composition bias toward basic and acidic residues. Positions 417–427 (DEEFSDSEDEG) are enriched in acidic residues. Basic and acidic residues predominate over residues 443–480 (VKTEEEKEGEDKKDVKEEEKAKDEKTDSKRVKEETKSV).

The protein belongs to the histone deacetylase family. HD type 1 subfamily. In terms of assembly, part of a large multiprotein complex that also contains RBBP4. In terms of tissue distribution, oocyte.

It localises to the nucleus. The protein localises to the cytoplasm. The enzyme catalyses N(6)-acetyl-L-lysyl-[histone] + H2O = L-lysyl-[histone] + acetate. It catalyses the reaction N(6)-acetyl-L-lysyl-[protein] + H2O = L-lysyl-[protein] + acetate. The catalysed reaction is N(6)-(2E)-butenoyl-L-lysyl-[protein] + H2O = (2E)-2-butenoate + L-lysyl-[protein]. Histone deacetylase that catalyzes the deacetylation of lysine residues on the N-terminal part of the core histones (H2A, H2B, H3 and H4). Histone deacetylation gives a tag for epigenetic repression and plays an important role in transcriptional regulation, cell cycle progression and developmental events. Histone deacetylases act via the formation of large multiprotein complexes. Also functions as deacetylase for non-histone proteins. In addition to protein deacetylase activity, also has protein-lysine deacylase activity: acts as a protein decrotonylase by mediating decrotonylation ((2E)-butenoyl) of histones. The chain is Probable histone deacetylase 1-A (hdac1-a) from Xenopus laevis (African clawed frog).